The following is a 404-amino-acid chain: Tripartite motif-containing 13 (404 aa).

An RING-type zinc finger spans residues 10–56; sequence CPICCCLFEDPRVLPCSHSFCKKCLEGILDGNRSPTWRPPFKCPTCR. A B box-type zinc finger spans residues 87-129; sequence PRMSQCRVHSGQPLNIFCATDLKLICGFCATTGDHKGHKFCAL. The Zn(2+) site is built by Cys-92, His-95, Cys-115, and His-121. The chain crosses the membrane as a helical span at residues 102–119; the sequence is IFCATDLKLICGFCATTG. Positions 186–236 form a coiled coil; it reads KLLRTLEHKRSEILSDLETLKLAVMQTFDPEINRLRSALEEQRRALNIAES.

Its subcellular location is the endoplasmic reticulum membrane. Its pathway is protein modification; protein ubiquitination. Functionally, E3 ubiquitin ligase involved in the retrotranslocation and turnover of membrane and secretory proteins from the ER through a set of processes named ER-associated degradation (ERAD). This process acts on misfolded proteins as well as in the regulated degradation of correctly folded proteins. This Danio rerio (Zebrafish) protein is Tripartite motif-containing 13 (trim13).